A 241-amino-acid polypeptide reads, in one-letter code: Major prion protein (241 aa).

A signal peptide spans 1 to 15 (MLVLFVATWSDLGLC). The interval 16 to 31 (KKRPKPGGWNTGGSRY) is interaction with ADGRG6. The interaction with GRB2, ERI3 and SYN1 stretch occupies residues 16 to 223 (KKRPKPGGWN…ESQAYYQRGS (208 aa)). Positions 18 to 101 (RPKPGGWNTG…WHKPNKPKTS (84 aa)) are disordered. Tandem repeats lie at residues 44–52 (PQGGGGWGQ), 53–60 (PHGGGWGQ), 61–68 (PHGGGWGQ), 69–76 (PHGGGWGQ), and 77–84 (PHGGGWGQ). The interval 44 to 84 (PQGGGGWGQPHGGGWGQPHGGGWGQPHGGGWGQPHGGGWGQ) is 5 X 8 AA tandem repeats of P-H-G-G-G-W-G-Q. A compositionally biased stretch (gly residues) spans 45 to 88 (QGGGGWGQPHGGGWGQPHGGGWGQPHGGGWGQPHGGGWGQGGGT). Residues His54, Gly55, Gly56, His62, Gly63, Gly64, His70, Gly71, Gly72, His78, Gly79, and Gly80 each coordinate Cu(2+). The segment covering 91–101 (QWHKPNKPKTS) has biased composition (basic residues). Cys172 and Cys207 form a disulfide bridge. N-linked (GlcNAc...) asparagine glycosylation is found at Asn174 and Asn190. Ser223 carries the GPI-anchor amidated serine lipid modification. The propeptide at 224–241 (SMVLFSSPPVILLISFLI) is removed in mature form.

The protein belongs to the prion family. In terms of assembly, monomer and homodimer. Has a tendency to aggregate into amyloid fibrils containing a cross-beta spine, formed by a steric zipper of superposed beta-strands. Soluble oligomers may represent an intermediate stage on the path to fibril formation. Copper binding may promote oligomerization. Interacts with GRB2, APP, ERI3/PRNPIP and SYN1. Mislocalized cytosolically exposed PrP interacts with MGRN1; this interaction alters MGRN1 subcellular location and causes lysosomal enlargement. Interacts with APP. Interacts with KIAA1191. Interacts with ADGRG6.

Its subcellular location is the cell membrane. It is found in the golgi apparatus. Functionally, its primary physiological function is unclear. May play a role in neuronal development and synaptic plasticity. May be required for neuronal myelin sheath maintenance. May promote myelin homeostasis through acting as an agonist for ADGRG6 receptor. May play a role in iron uptake and iron homeostasis. Soluble oligomers are toxic to cultured neuroblastoma cells and induce apoptosis (in vitro). Association with GPC1 (via its heparan sulfate chains) targets PRNP to lipid rafts. Also provides Cu(2+) or Zn(2+) for the ascorbate-mediated GPC1 deaminase degradation of its heparan sulfate side chains. The protein is Major prion protein (PRNP) of Mandrillus sphinx (Mandrill).